A 100-amino-acid polypeptide reads, in one-letter code: Integration host factor subunit alpha (100 aa).

The segment at 53-72 is disordered; the sequence is FDLRDKRQRPGRNPKTGEEI.

This sequence belongs to the bacterial histone-like protein family. As to quaternary structure, heterodimer of an alpha and a beta chain.

Functionally, this protein is one of the two subunits of integration host factor, a specific DNA-binding protein that functions in genetic recombination as well as in transcriptional and translational control. The chain is Integration host factor subunit alpha from Pseudomonas entomophila (strain L48).